Here is a 754-residue protein sequence, read N- to C-terminus: 1,4-alpha-glucan branching enzyme GlgB (754 aa).

D431 (nucleophile) is an active-site residue. The active-site Proton donor is the E484.

Belongs to the glycosyl hydrolase 13 family. GlgB subfamily. As to quaternary structure, monomer.

The enzyme catalyses Transfers a segment of a (1-&gt;4)-alpha-D-glucan chain to a primary hydroxy group in a similar glucan chain.. It participates in glycan biosynthesis; glycogen biosynthesis. Functionally, catalyzes the formation of the alpha-1,6-glucosidic linkages in glycogen by scission of a 1,4-alpha-linked oligosaccharide from growing alpha-1,4-glucan chains and the subsequent attachment of the oligosaccharide to the alpha-1,6 position. This Prochlorococcus marinus (strain MIT 9301) protein is 1,4-alpha-glucan branching enzyme GlgB.